A 194-amino-acid chain; its full sequence is MRWSMLVLLLLSCSQTFAQRPGDICPQNPHHGQDVTANTVPTVDPKLFNKRRYRSPRVLFSEHPPDSEPSRSRTKRKAGPPQHRGVYSVCESISHWEGNKTKATDITGNEVTVLPDVIINNSKKKQYFFETTCSSGRTGGSGCLGIDARHWNSYCTNSHTFVRALTSFKNLVAWRLIRINVACVCVLSRKSWRA.

Positions 1 to 18 are cleaved as a signal peptide; it reads MRWSMLVLLLLSCSQTFA. Positions 19–76 are excised as a propeptide; the sequence is QRPGDICPQNPHHGQDVTANTVPTVDPKLFNKRRYRSPRVLFSEHPPDSEPSRSRTKR. Residues 54–84 are disordered; it reads RSPRVLFSEHPPDSEPSRSRTKRKAGPPQHR. 3 disulfide bridges follow: cysteine 90–cysteine 155, cysteine 133–cysteine 183, and cysteine 143–cysteine 185. Asparagine 99 and asparagine 120 each carry an N-linked (GlcNAc...) asparagine glycan.

The protein belongs to the NGF-beta family. As to quaternary structure, homodimer.

It localises to the secreted. In terms of biological role, nerve growth factor is important for the development and maintenance of the sympathetic and sensory nervous systems. It stimulates division and differentiation of sympathetic and embryonic sensory neurons. This is Nerve growth factor (ngf) from Danio rerio (Zebrafish).